Here is a 288-residue protein sequence, read N- to C-terminus: Thiamine-monophosphate kinase (288 aa).

3 residues coordinate Mg(2+): Asp-20, Thr-30, and Asp-32. A substrate-binding site is contributed by Asp-39. Asp-60 and Asp-107 together coordinate Mg(2+). Residues 106 to 107 and Arg-130 each bind ATP; that span reads GD. A Mg(2+)-binding site is contributed by Asp-188. Ser-190 contributes to the ATP binding site. Asp-191 is a binding site for Mg(2+). Trp-286 is a binding site for substrate.

It belongs to the thiamine-monophosphate kinase family.

The catalysed reaction is thiamine phosphate + ATP = thiamine diphosphate + ADP. It functions in the pathway cofactor biosynthesis; thiamine diphosphate biosynthesis; thiamine diphosphate from thiamine phosphate: step 1/1. Functionally, catalyzes the ATP-dependent phosphorylation of thiamine-monophosphate (TMP) to form thiamine-pyrophosphate (TPP), the active form of vitamin B1. The polypeptide is Thiamine-monophosphate kinase (Halobacterium salinarum (strain ATCC 700922 / JCM 11081 / NRC-1) (Halobacterium halobium)).